A 165-amino-acid chain; its full sequence is Copper-resistant cuproprotein CopI (165 aa).

Positions 1 to 23 (MKNRILRPALLCVAALFATTAQA) are cleaved as a signal peptide. Basic and acidic residues predominate over residues 25–42 (AGHDHGSAHAGAHAHDAD). Residues 25–50 (AGHDHGSAHAGAHAHDADTPYGRPGD) are disordered. H93, C148, H153, and M158 together coordinate Cu(2+).

Belongs to the CopI family. In terms of assembly, monomer.

The protein resides in the periplasm. Its function is as follows. Involved in copper tolerance. Required for copper resistance under both aerobic and anaerobic photosynthetic growth conditions. Binds copper. Could be an important defense against copper in the periplasm and may protect not only c type cytochromes but also other proteins with cysteine residues from copper ions that may catalyze nonnative disulfide bond formation. This is Copper-resistant cuproprotein CopI from Rubrivivax gelatinosus (Rhodocyclus gelatinosus).